The chain runs to 703 residues: Stonustoxin subunit alpha (703 aa).

The segment at 2-265 (SSDLVMPALG…KAQQLIQEIN (264 aa)) is structural MACPF/CDC pore-forming domain. Residues 266–385 (VSKVRRIHTT…GMVEGTQAKF (120 aa)) form a structural FAT domain region. Positions 386–517 (VSNQTELDRE…PRMPFVQGYK (132 aa)) are thioredoxin (THX) domain. A B30.2/SPRY domain is found at 508 to 703 (PRMPFVQGYK…AGNHGTLRLL (196 aa)).

It belongs to the SNTX/VTX toxin family. As to quaternary structure, heterodimer of alpha and beta subunits; non-covalently linked. Intrachain disulfide bonds may be present in the heterodimer. Post-translationally, not glycosylated. In terms of tissue distribution, expressed by the venom gland.

The protein localises to the secreted. Its function is as follows. This lethal (towards mammals) heterodimer induces hemolytic activities due to its ability to form pores in the cell membrane. The pore may be composed of 10 SNTX-alpha/beta heterodimers. The toxin elicits potent hypotension which is endothelium-dependent and appears to be mediated by the nitric oxide pathway and activation of potassium channels. In addition, it displays edema-inducing activities, increases vascular permeability. It also shows myotoxic activities and interferes irreversibly with neuromuscular function. It also induces irreversible platelet aggregation in rabbit or rat (but not in human or mouse) whole blood. In addition, it has been observed to increase spontaneous quantal acetylcholine release from isolated frog cutaneous pectoris motor endings. The protein is Stonustoxin subunit alpha of Synanceia horrida (Estuarine stonefish).